Consider the following 435-residue polypeptide: Enolase (435 aa).

Glutamine 167 serves as a coordination point for (2R)-2-phosphoglycerate. Glutamate 209 acts as the Proton donor in catalysis. Residues aspartate 246, glutamate 292, and aspartate 319 each contribute to the Mg(2+) site. The (2R)-2-phosphoglycerate site is built by lysine 344, arginine 373, serine 374, and lysine 395. The active-site Proton acceptor is the lysine 344.

The protein belongs to the enolase family. The cofactor is Mg(2+).

It localises to the cytoplasm. The protein localises to the secreted. It is found in the cell surface. It catalyses the reaction (2R)-2-phosphoglycerate = phosphoenolpyruvate + H2O. The protein operates within carbohydrate degradation; glycolysis; pyruvate from D-glyceraldehyde 3-phosphate: step 4/5. In terms of biological role, catalyzes the reversible conversion of 2-phosphoglycerate (2-PG) into phosphoenolpyruvate (PEP). It is essential for the degradation of carbohydrates via glycolysis. The polypeptide is Enolase (Lachnospira eligens (strain ATCC 27750 / DSM 3376 / VPI C15-48 / C15-B4) (Eubacterium eligens)).